Consider the following 184-residue polypeptide: Putative NAD(P)H nitroreductase HI_1542 (184 aa).

Residues 10-12, Arg-35, and His-39 contribute to the FMN site; that span reads RKS. NAD(+) is bound at residue 122 to 127; that stretch reads AAQAQG. FMN is bound at residue 132-134; the sequence is WIS.

This sequence belongs to the nitroreductase family. As to quaternary structure, homodimer. FMN is required as a cofactor.

The chain is Putative NAD(P)H nitroreductase HI_1542 from Haemophilus influenzae (strain ATCC 51907 / DSM 11121 / KW20 / Rd).